Here is a 100-residue protein sequence, read N- to C-terminus: Large ribosomal subunit protein bL21 (100 aa).

It belongs to the bacterial ribosomal protein bL21 family. As to quaternary structure, part of the 50S ribosomal subunit. Contacts protein L20.

This protein binds to 23S rRNA in the presence of protein L20. In Wolbachia sp. subsp. Drosophila simulans (strain wRi), this protein is Large ribosomal subunit protein bL21.